The sequence spans 427 residues: Serine hydroxymethyltransferase (427 aa).

Residues leucine 122 and 126-128 (GHL) each bind (6S)-5,6,7,8-tetrahydrofolate. Lysine 231 carries the N6-(pyridoxal phosphate)lysine modification.

The protein belongs to the SHMT family. In terms of assembly, homodimer. Pyridoxal 5'-phosphate serves as cofactor.

The protein localises to the cytoplasm. The catalysed reaction is (6R)-5,10-methylene-5,6,7,8-tetrahydrofolate + glycine + H2O = (6S)-5,6,7,8-tetrahydrofolate + L-serine. The protein operates within one-carbon metabolism; tetrahydrofolate interconversion. It functions in the pathway amino-acid biosynthesis; glycine biosynthesis; glycine from L-serine: step 1/1. In terms of biological role, catalyzes the reversible interconversion of serine and glycine with tetrahydrofolate (THF) serving as the one-carbon carrier. This reaction serves as the major source of one-carbon groups required for the biosynthesis of purines, thymidylate, methionine, and other important biomolecules. Also exhibits THF-independent aldolase activity toward beta-hydroxyamino acids, producing glycine and aldehydes, via a retro-aldol mechanism. This is Serine hydroxymethyltransferase from Acidobacterium capsulatum (strain ATCC 51196 / DSM 11244 / BCRC 80197 / JCM 7670 / NBRC 15755 / NCIMB 13165 / 161).